A 368-amino-acid chain; its full sequence is Agmatine deiminase (368 aa).

The active-site Amidino-cysteine intermediate is Cys-357.

It belongs to the agmatine deiminase family. In terms of assembly, homodimer.

The catalysed reaction is agmatine + H2O = N-carbamoylputrescine + NH4(+). It functions in the pathway amine and polyamine biosynthesis; putrescine biosynthesis via agmatine pathway; N-carbamoylputrescine from agmatine: step 1/1. Functionally, mediates the hydrolysis of agmatine into N-carbamoylputrescine in the arginine decarboxylase (ADC) pathway of putrescine biosynthesis, a basic polyamine. The polypeptide is Agmatine deiminase (Pseudomonas aeruginosa (strain LESB58)).